Reading from the N-terminus, the 209-residue chain is Uridine kinase (209 aa).

12–19 (GGSASGKT) contacts ATP.

It belongs to the uridine kinase family.

It localises to the cytoplasm. It carries out the reaction uridine + ATP = UMP + ADP + H(+). The catalysed reaction is cytidine + ATP = CMP + ADP + H(+). It functions in the pathway pyrimidine metabolism; CTP biosynthesis via salvage pathway; CTP from cytidine: step 1/3. It participates in pyrimidine metabolism; UMP biosynthesis via salvage pathway; UMP from uridine: step 1/1. The polypeptide is Uridine kinase (Chloroflexus aggregans (strain MD-66 / DSM 9485)).